The following is a 320-amino-acid chain: Beta-carotene ketolase (320 aa).

The enzyme catalyses all-trans-beta-carotene + 2 AH2 + 2 O2 = echinenone + 2 A + 3 H2O. It catalyses the reaction echinenone + 2 AH2 + 2 O2 = canthaxanthin + 2 A + 3 H2O. It participates in carotenoid biosynthesis; astaxanthin biosynthesis. Functionally, converts beta-carotene to canthaxanthin via echinenone. The sequence is that of Beta-carotene ketolase from Haematococcus lacustris (Green alga).